Consider the following 148-residue polypeptide: Natriuretic peptide BF131 (148 aa).

The signal sequence occupies residues 1-27 (MVGPSRLAGGGLLLLLLLALLPLALDG). A propeptide spanning residues 28 to 83 (KPAPPPQALPKDPAAASAAERIMRALLPDSKSSRPATDRMVHPEHQAGGGDTRRLQ) is cleaved from the precursor. Disordered regions lie at residues 54–83 (LPDS…RRLQ) and 105–127 (TSDM…PSAA). The segment covering 63 to 83 (ATDRMVHPEHQAGGGDTRRLQ) has biased composition (basic and acidic residues). A disulfide bridge connects residues Cys94 and Cys110. Residues 130–148 (AVTWLIRDLRADSKQSRAA) constitute a propeptide that is removed on maturation.

This sequence belongs to the natriuretic peptide family. In terms of tissue distribution, expressed by the venom gland.

It is found in the secreted. Functionally, natriuretic peptide that dose-dependently induces the rapid relaxation of rat aortic strips phenylephrine-precontracted. Acts by stimulating cGMP production in a dose-dependent manner (by probably activating NPR1 and/or NPR2). May also show potent hypotensive effects. The chain is Natriuretic peptide BF131 from Bungarus flaviceps flaviceps (Red-headed krait).